The sequence spans 275 residues: Large ribosomal subunit protein uL2 (275 aa).

The interval 225–275 (MNPVDHPHGGGEGRSPIGRPPVTPWGKPALGTRTRNKKKASSKLIVKRRTK) is disordered. Over residues 258–275 (TRNKKKASSKLIVKRRTK) the composition is skewed to basic residues.

It belongs to the universal ribosomal protein uL2 family. As to quaternary structure, part of the 50S ribosomal subunit. Forms a bridge to the 30S subunit in the 70S ribosome.

Its function is as follows. One of the primary rRNA binding proteins. Required for association of the 30S and 50S subunits to form the 70S ribosome, for tRNA binding and peptide bond formation. It has been suggested to have peptidyltransferase activity; this is somewhat controversial. Makes several contacts with the 16S rRNA in the 70S ribosome. The sequence is that of Large ribosomal subunit protein uL2 from Desulforudis audaxviator (strain MP104C).